A 283-amino-acid polypeptide reads, in one-letter code: Polyamine aminopropyltransferase (283 aa).

In terms of domain architecture, PABS spans 5-238 (QTWIDEYHKG…GIWSWTFASS (234 aa)). Q32 contributes to the S-methyl-5'-thioadenosine binding site. Spermidine-binding residues include H63 and D87. Residues E107 and 139–140 (DG) each bind S-methyl-5'-thioadenosine. D158 functions as the Proton acceptor in the catalytic mechanism. 158-161 (DCSD) contacts spermidine.

This sequence belongs to the spermidine/spermine synthase family. Homodimer or homotetramer.

The protein localises to the cytoplasm. The catalysed reaction is S-adenosyl 3-(methylsulfanyl)propylamine + putrescine = S-methyl-5'-thioadenosine + spermidine + H(+). It functions in the pathway amine and polyamine biosynthesis; spermidine biosynthesis; spermidine from putrescine: step 1/1. In terms of biological role, catalyzes the irreversible transfer of a propylamine group from the amino donor S-adenosylmethioninamine (decarboxy-AdoMet) to putrescine (1,4-diaminobutane) to yield spermidine. This chain is Polyamine aminopropyltransferase, found in Prochlorococcus marinus (strain MIT 9301).